Consider the following 216-residue polypeptide: ATP-dependent Clp protease proteolytic subunit 1 (216 aa).

Catalysis depends on Ser-119, which acts as the Nucleophile. Residue His-144 is part of the active site.

Belongs to the peptidase S14 family. As to quaternary structure, fourteen ClpP subunits assemble into 2 heptameric rings which stack back to back to give a disk-like structure with a central cavity, resembling the structure of eukaryotic proteasomes.

It is found in the cytoplasm. It carries out the reaction Hydrolysis of proteins to small peptides in the presence of ATP and magnesium. alpha-casein is the usual test substrate. In the absence of ATP, only oligopeptides shorter than five residues are hydrolyzed (such as succinyl-Leu-Tyr-|-NHMec, and Leu-Tyr-Leu-|-Tyr-Trp, in which cleavage of the -Tyr-|-Leu- and -Tyr-|-Trp bonds also occurs).. Its function is as follows. Cleaves peptides in various proteins in a process that requires ATP hydrolysis. Has a chymotrypsin-like activity. Plays a major role in the degradation of misfolded proteins. The polypeptide is ATP-dependent Clp protease proteolytic subunit 1 (Cutibacterium acnes (strain DSM 16379 / KPA171202) (Propionibacterium acnes)).